The following is a 503-amino-acid chain: Maturase K (503 aa).

It belongs to the intron maturase 2 family. MatK subfamily.

It is found in the plastid. The protein localises to the chloroplast. In terms of biological role, usually encoded in the trnK tRNA gene intron. Probably assists in splicing its own and other chloroplast group II introns. The polypeptide is Maturase K (Diospyros kaki (Kaki persimmon)).